Consider the following 238-residue polypeptide: Pyridoxine 5'-phosphate synthase (238 aa).

Asn6 contributes to the 3-amino-2-oxopropyl phosphate binding site. Position 8–9 (8–9 (DH)) interacts with 1-deoxy-D-xylulose 5-phosphate. Arg17 provides a ligand contact to 3-amino-2-oxopropyl phosphate. The active-site Proton acceptor is the His42. Positions 44 and 49 each coordinate 1-deoxy-D-xylulose 5-phosphate. Glu69 serves as the catalytic Proton acceptor. Position 99 (Thr99) interacts with 1-deoxy-D-xylulose 5-phosphate. Catalysis depends on His190, which acts as the Proton donor. 3-amino-2-oxopropyl phosphate contacts are provided by residues Gly191 and 212 to 213 (GH).

It belongs to the PNP synthase family. In terms of assembly, homooctamer; tetramer of dimers.

The protein resides in the cytoplasm. The enzyme catalyses 3-amino-2-oxopropyl phosphate + 1-deoxy-D-xylulose 5-phosphate = pyridoxine 5'-phosphate + phosphate + 2 H2O + H(+). The protein operates within cofactor biosynthesis; pyridoxine 5'-phosphate biosynthesis; pyridoxine 5'-phosphate from D-erythrose 4-phosphate: step 5/5. Its function is as follows. Catalyzes the complicated ring closure reaction between the two acyclic compounds 1-deoxy-D-xylulose-5-phosphate (DXP) and 3-amino-2-oxopropyl phosphate (1-amino-acetone-3-phosphate or AAP) to form pyridoxine 5'-phosphate (PNP) and inorganic phosphate. This chain is Pyridoxine 5'-phosphate synthase, found in Chlorobium phaeobacteroides (strain BS1).